Here is a 120-residue protein sequence, read N- to C-terminus: Neuromedin-B (120 aa).

Residues 1 to 29 (MSAVPLTRMLPLRFLTHLLLLSFIPLYFC) form the signal peptide. A propeptide spanning residues 30-44 (MEFSEDARNIEKIRR) is cleaved from the precursor. Residue Met-54 is modified to Methionine amide. Residues 58–120 (SLQDTYNPSE…MDDYIKTTQK (63 aa)) constitute a propeptide that is removed on maturation.

The protein belongs to the bombesin/neuromedin-B/ranatensin family. In terms of tissue distribution, brain, intestine, and ovaries and early embryos (stages 2 and 10).

It is found in the secreted. Functionally, stimulates smooth muscle contraction. This Xenopus laevis (African clawed frog) protein is Neuromedin-B (nmb).